The sequence spans 199 residues: Probable GTP-binding protein EngB (199 aa).

The EngB-type G domain maps to 28–199 (DLPEIALAGR…DSWDAILEQV (172 aa)). GTP contacts are provided by residues 36–43 (GRSNVGKS), 63–67 (GKTQL), 81–84 (DVPG), 148–151 (TKAD), and 180–182 (FSS). Residues Ser-43 and Thr-65 each contribute to the Mg(2+) site.

It belongs to the TRAFAC class TrmE-Era-EngA-EngB-Septin-like GTPase superfamily. EngB GTPase family. Mg(2+) is required as a cofactor.

Necessary for normal cell division and for the maintenance of normal septation. The chain is Probable GTP-binding protein EngB from Streptococcus pyogenes serotype M49 (strain NZ131).